The sequence spans 1363 residues: Spike glycoprotein (1363 aa).

The first 13 residues, 1–13, serve as a signal peptide directing secretion; that stretch reads MFLILLISLPTAF. Over 14–1307 the chain is Extracellular; it reads AVIGDLKCTT…GTYEYYVKWP (1294 aa). The region spanning 15–298 is the BetaCoV S1-NTD domain; that stretch reads VIGDLKCTTV…DFMSEIKCKT (284 aa). Disulfide bonds link Cys21–Cys165, Cys160–Cys193, Cys172–Cys252, Cys286–Cys296, and Cys331–Cys356. Asn59 and Asn133 each carry an N-linked (GlcNAc...) asparagine; by host glycan. A glycan (N-linked (GlcNAc...) asparagine; by host) is linked at Asn198. The BetaCoV S1-CTD domain occupies 329-617; the sequence is PDCNIEAWLN…DVNSGTTCST (289 aa). Asn359 carries N-linked (GlcNAc...) asparagine; by host glycosylation. 2 disulfide bridges follow: Cys374–Cys427 and Cys386–Cys615. 7 N-linked (GlcNAc...) asparagine; by host glycosylation sites follow: Asn437, Asn649, Asn676, Asn696, Asn714, Asn739, and Asn788. 2 fusion peptide regions span residues 914–935 and 933–953; these read SAIE…VEAY and EAYN…VQSY. N-linked (GlcNAc...) asparagine; by host glycosylation is present at Asn937. Cys938 and Cys949 form a disulfide bridge. The heptad repeat 1 stretch occupies residues 1014–1064; sequence QKLIANAFNNALGAIQEGFDATNSALVKIQAVVNANAEALNNLLQQLSNRF. Residues 1043–1087 adopt a coiled-coil conformation; the sequence is QAVVNANAEALNNLLQQLSNRFGAISSSLQEILSRLDALEAQAQI. N-linked (GlcNAc...) asparagine; by host glycans are attached at residues Asn1194, Asn1224, Asn1234, Asn1253, Asn1267, and Asn1288. A heptad repeat 2 region spans residues 1258-1296; it reads APDLSLDYINVTFLDLQDEMNRLQEAIKVLNQSYINLKD. Residues 1269-1297 adopt a coiled-coil conformation; it reads TFLDLQDEMNRLQEAIKVLNQSYINLKDI. Residues 1308–1328 traverse the membrane as a helical segment; the sequence is WYVWLLIGFAGVAMLVLLFFI. The Cytoplasmic portion of the chain corresponds to 1329–1363; the sequence is CCCTGCGTSCFKKCGGCCDDYTGHQELVIKTSHDD. The KxHxx signature appears at 1359-1363; the sequence is TSHDD.

The protein belongs to the betacoronaviruses spike protein family. In terms of assembly, homotrimer; each monomer consists of a S1 and a S2 subunit. The resulting peplomers protrude from the virus surface as spikes. Specific enzymatic cleavages in vivo yield mature proteins. The precursor is processed into S1 and S2 by host cell furin or another cellular protease to yield the mature S1 and S2 proteins. Additionally, a second cleavage leads to the release of a fusion peptide after viral attachment to host cell receptor. Post-translationally, the cytoplasmic Cys-rich domain is palmitoylated. Spike glycoprotein is digested within host endosomes.

It localises to the virion membrane. It is found in the host endoplasmic reticulum-Golgi intermediate compartment membrane. Its subcellular location is the host cell membrane. Attaches the virion to the cell membrane by interacting with host receptor, initiating the infection. In terms of biological role, mediates fusion of the virion and cellular membranes by acting as a class I viral fusion protein. Under the current model, the protein has at least three conformational states: pre-fusion native state, pre-hairpin intermediate state, and post-fusion hairpin state. During viral and target cell membrane fusion, the coiled coil regions (heptad repeats) assume a trimer-of-hairpins structure, positioning the fusion peptide in close proximity to the C-terminal region of the ectodomain. The formation of this structure appears to drive apposition and subsequent fusion of viral and target cell membranes. Its function is as follows. Acts as a viral fusion peptide which is unmasked following S2 cleavage occurring upon virus endocytosis. This chain is Spike glycoprotein, found in Bos taurus (Bovine).